Consider the following 168-residue polypeptide: Lipid transfer protein EARLI 1 (168 aa).

A signal peptide spans 1 to 25 (MASKNSASIALFFALNIIFFTLTAA). Residues 32-81 (PSPKHKPVPSPKPKPVPSPKPKPVPSPSVPSPSVPSPNPRPVTPPRTPGS) are disordered. The A-1 repeat unit spans residues 34–41 (PKHKPVPS). Positions 34 to 57 (PKHKPVPSPKPKPVPSPKPKPVPS) are 3 X 8 AA repeats A of P-K-[HP]-K-P-V-P-S. Residues 39 to 78 (VPSPKPKPVPSPKPKPVPSPSVPSPSVPSPNPRPVTPPRT) are compositionally biased toward pro residues. The stretch at 42 to 49 (PKPKPVPS) is one A-2 repeat. The A-3 repeat unit spans residues 50–57 (PKPKPVPS). The stretch at 58-62 (PSVPS) is one B-1 repeat. The tract at residues 58-67 (PSVPSPSVPS) is 2 X 58 AA tandem repeats B of P-S-V-P-S. The stretch at 63 to 67 (PSVPS) is one B-2 repeat.

Belongs to the plant LTP family. PEARLI1 subfamily. Mostly expressed in aerial part of seedlings, and, to a lower extent, in roots. Higher basal levels in early-flowering ecotypes.

The protein localises to the secreted. The protein resides in the cell wall. Probable lipid transfer protein (LTP). May improve freezing survival. Seems to control the flowering process and lignin synthesis. Has an auxiliary role for germinability and early seedling development under low temperature and salt stress conditions, probably in an abscisic acid- (ABA) dependent manner. Confers resistance to Botrytis cinerea and exhibits anti-fungal activity, at least against S.cerevisiae, B.cinerea and Fusarium oxysporum, probably by increasing their membrane permeability. This Arabidopsis thaliana (Mouse-ear cress) protein is Lipid transfer protein EARLI 1 (EARLI1).